A 263-amino-acid chain; its full sequence is Glutamate racemase (263 aa).

Substrate-binding positions include 13–14 (DS) and 45–46 (YG). Cys-77 (proton donor/acceptor) is an active-site residue. 78 to 79 (NT) contributes to the substrate binding site. Catalysis depends on Cys-185, which acts as the Proton donor/acceptor. Substrate is bound at residue 186–187 (TH).

The protein belongs to the aspartate/glutamate racemases family.

The enzyme catalyses L-glutamate = D-glutamate. Its pathway is cell wall biogenesis; peptidoglycan biosynthesis. Provides the (R)-glutamate required for cell wall biosynthesis. This is Glutamate racemase from Vibrio vulnificus (strain CMCP6).